Reading from the N-terminus, the 816-residue chain is Chitin synthase 1 (816 aa).

The segment at 1 to 21 is disordered; the sequence is MLSQGEILRNPSRTRLQRPPK. Residues 1–32 lie on the Cytoplasmic side of the membrane; it reads MLSQGEILRNPSRTRLQRPPKSRSERKGWWYR. A helical membrane pass occupies residues 33–53; sequence VTIFLTCLIPNFMLRCFGMTT. Over 54 to 63 the chain is Extracellular; it reads PEVQHAWREK. The helical transmembrane segment at 64–84 threads the bilayer; sequence VALCICIFFCWIILGFTTYGM. At 85–240 the chain is on the cytoplasmic side; that stretch reads NTIICKGSNQ…TPGCLLADTM (156 aa). A helical transmembrane segment spans residues 241-261; the sequence is FWITTISIFGLIITKFLLGFF. Residues 262 to 697 lie on the Extracellular side of the membrane; sequence YSWYAKRRPK…QLVVVMELFG (436 aa). N-linked (GlcNAc...) asparagine glycans are attached at residues N319 and N664. The chain crosses the membrane as a helical span at residues 698 to 718; the sequence is TLVLPAAIIFTFVMIAVSILI. At 719-720 the chain is on the cytoplasmic side; that stretch reads EP. A helical membrane pass occupies residues 721-741; sequence AWVPLIMLVGIFGLPAVLILI. Topologically, residues 742–745 are extracellular; that stretch reads TTME. The helical transmembrane segment at 746-766 threads the bilayer; sequence IQYVFWCLVYILSIPIWNFVL. Topologically, residues 767–816 are cytoplasmic; the sequence is PTYAFWHFDNFSWGDTRKVDGEGKEDEEGEFDHTKIRIRELEEFLSEANK.

This sequence belongs to the chitin synthase family. Class IV subfamily.

The protein localises to the cell membrane. It carries out the reaction [(1-&gt;4)-N-acetyl-beta-D-glucosaminyl](n) + UDP-N-acetyl-alpha-D-glucosamine = [(1-&gt;4)-N-acetyl-beta-D-glucosaminyl](n+1) + UDP + H(+). In terms of biological role, polymerizes chitin, a structural polymer of the cell wall and septum, by transferring the sugar moiety of UDP-GlcNAc to the non-reducing end of the growing chitin polymer. The sequence is that of Chitin synthase 1 (CHS1) from Encephalitozoon cuniculi (strain GB-M1) (Microsporidian parasite).